Reading from the N-terminus, the 352-residue chain is Nicotinate-nucleotide--dimethylbenzimidazole phosphoribosyltransferase (352 aa).

The active-site Proton acceptor is Glu318.

It belongs to the CobT family.

It carries out the reaction 5,6-dimethylbenzimidazole + nicotinate beta-D-ribonucleotide = alpha-ribazole 5'-phosphate + nicotinate + H(+). It functions in the pathway nucleoside biosynthesis; alpha-ribazole biosynthesis; alpha-ribazole from 5,6-dimethylbenzimidazole: step 1/2. Its function is as follows. Catalyzes the synthesis of alpha-ribazole-5'-phosphate from nicotinate mononucleotide (NAMN) and 5,6-dimethylbenzimidazole (DMB). The chain is Nicotinate-nucleotide--dimethylbenzimidazole phosphoribosyltransferase from Geobacter sulfurreducens (strain ATCC 51573 / DSM 12127 / PCA).